A 416-amino-acid chain; its full sequence is Probable protein phosphatase 2C 75 (416 aa).

2 disordered regions span residues 1-20 and 32-51; these read MTEIYRTISTGRGDDVSPTK and RRQAAVFGEPSSSRNRDRTD. The PPM-type phosphatase domain occupies 108–411; the sequence is LYGIVSVMGR…DNISVVVIDL (304 aa). Mn(2+)-binding residues include Asp-149, Gly-150, Asp-337, and Asp-402.

The protein belongs to the PP2C family. The cofactor is Mg(2+). Mn(2+) serves as cofactor.

It carries out the reaction O-phospho-L-seryl-[protein] + H2O = L-seryl-[protein] + phosphate. The catalysed reaction is O-phospho-L-threonyl-[protein] + H2O = L-threonyl-[protein] + phosphate. Negative regulator of abscisic acid (ABA) responses during seed germination. This chain is Probable protein phosphatase 2C 75 (AHG1), found in Arabidopsis thaliana (Mouse-ear cress).